Reading from the N-terminus, the 247-residue chain is Uroporphyrinogen-III C-methyltransferase (247 aa).

Residues P12, 117 to 118 (TA), M168, A197, and A225 contribute to the S-adenosyl-L-homocysteine site.

This sequence belongs to the precorrin methyltransferase family.

The catalysed reaction is uroporphyrinogen III + 2 S-adenosyl-L-methionine = precorrin-2 + 2 S-adenosyl-L-homocysteine + H(+). Its pathway is cofactor biosynthesis; adenosylcobalamin biosynthesis; precorrin-2 from uroporphyrinogen III: step 1/1. It functions in the pathway porphyrin-containing compound metabolism; siroheme biosynthesis; precorrin-2 from uroporphyrinogen III: step 1/1. Its function is as follows. Catalyzes the two successive C-2 and C-7 methylation reactions involved in the conversion of uroporphyrinogen III to precorrin-2 via the intermediate formation of precorrin-1. It is a step in the biosynthesis of both cobalamin (vitamin B12) and siroheme. This chain is Uroporphyrinogen-III C-methyltransferase, found in Pseudomonas fluorescens.